The following is a 435-amino-acid chain: NADH-quinone oxidoreductase subunit D (435 aa).

This sequence belongs to the complex I 49 kDa subunit family. In terms of assembly, NDH-1 is composed of 14 different subunits. Subunits NuoB, C, D, E, F, and G constitute the peripheral sector of the complex.

It localises to the cell inner membrane. It catalyses the reaction a quinone + NADH + 5 H(+)(in) = a quinol + NAD(+) + 4 H(+)(out). NDH-1 shuttles electrons from NADH, via FMN and iron-sulfur (Fe-S) centers, to quinones in the respiratory chain. The immediate electron acceptor for the enzyme in this species is believed to be ubiquinone. Couples the redox reaction to proton translocation (for every two electrons transferred, four hydrogen ions are translocated across the cytoplasmic membrane), and thus conserves the redox energy in a proton gradient. The protein is NADH-quinone oxidoreductase subunit D of Xylella fastidiosa (strain 9a5c).